A 178-amino-acid polypeptide reads, in one-letter code: Conodipine-P3 (178 aa).

A signal peptide spans 1–24 (MKLLAPVLWAMAALGVTWLVAVDS). The residue at position 38 (proline 38) is a 4-hydroxyproline. A 4-hydroxyproline; partial mark is found at proline 42 and proline 49. The active site involves histidine 54. A propeptide spans 98–130 (KREVTSHRATSIAHSRLWKTALDQKSFLNRKAR) (interchain peptide). Residue glutamine 131 is modified to Pyrrolidone carboxylic acid. At proline 137 the chain carries 4-hydroxyproline; partial.

It belongs to the phospholipase A2 family. Group IX subfamily. Heterodimer of an alpha and a beta chain; probably disulfide-linked. It depends on Ca(2+) as a cofactor. In terms of tissue distribution, expressed by the venom duct.

Its subcellular location is the secreted. It catalyses the reaction a 1,2-diacyl-sn-glycero-3-phosphocholine + H2O = a 1-acyl-sn-glycero-3-phosphocholine + a fatty acid + H(+). Catalyzes the calcium-dependent hydrolysis of the 2-acyl groups in 3-sn-phosphoglycerides. The polypeptide is Conodipine-P3 (Conus purpurascens (Purple cone)).